The primary structure comprises 322 residues: Protein-methionine-sulfoxide reductase catalytic subunit MsrP (322 aa).

The tat-type signal signal peptide spans 1-59 (MSFRDALNLPSSEITDESVYRDRRRLLQLLALTPALGVAGCAEADPPPPPKTVVTPAQA). Mo-molybdopterin is bound by residues asparagine 79, 82 to 83 (YE), cysteine 137, threonine 172, asparagine 220, arginine 225, and 236 to 238 (SIK).

It belongs to the MsrP family. As to quaternary structure, heterodimer of a catalytic subunit (MsrP) and a heme-binding subunit (MsrQ). The cofactor is Mo-molybdopterin. Predicted to be exported by the Tat system. The position of the signal peptide cleavage has not been experimentally proven.

It is found in the periplasm. The catalysed reaction is L-methionyl-[protein] + a quinone + H2O = L-methionyl-(S)-S-oxide-[protein] + a quinol. It catalyses the reaction L-methionyl-[protein] + a quinone + H2O = L-methionyl-(R)-S-oxide-[protein] + a quinol. Part of the MsrPQ system that repairs oxidized periplasmic proteins containing methionine sulfoxide residues (Met-O), using respiratory chain electrons. Thus protects these proteins from oxidative-stress damage caused by reactive species of oxygen and chlorine generated by the host defense mechanisms. MsrPQ is essential for the maintenance of envelope integrity under bleach stress, rescuing a wide series of structurally unrelated periplasmic proteins from methionine oxidation. The catalytic subunit MsrP is non-stereospecific, being able to reduce both (R-) and (S-) diastereoisomers of methionine sulfoxide. This Xanthomonas axonopodis pv. citri (strain 306) protein is Protein-methionine-sulfoxide reductase catalytic subunit MsrP.